We begin with the raw amino-acid sequence, 744 residues long: TonB-dependent heme receptor A (744 aa).

An N-terminal signal peptide occupies residues 1–24 (MNILINKRIFLLVTLVGIQLNVTA). Positions 45-157 (DDSNKLPGRS…FAGTVKFETK (113 aa)) constitute a TBDR plug domain. One can recognise a TBDR beta-barrel domain in the interval 168–744 (KIGGFLKYGN…NIKFSLSQKF (577 aa)).

Belongs to the TonB-dependent receptor family.

The protein localises to the cell outer membrane. In terms of biological role, heme receptor. The chain is TonB-dependent heme receptor A (tdhA) from Haemophilus influenzae (strain ATCC 51907 / DSM 11121 / KW20 / Rd).